Consider the following 351-residue polypeptide: Heat-inducible transcription repressor HrcA (351 aa).

The protein belongs to the HrcA family.

Negative regulator of class I heat shock genes (grpE-dnaK-dnaJ and groELS operons). Prevents heat-shock induction of these operons. The chain is Heat-inducible transcription repressor HrcA from Beutenbergia cavernae (strain ATCC BAA-8 / DSM 12333 / CCUG 43141 / JCM 11478 / NBRC 16432 / NCIMB 13614 / HKI 0122).